Here is a 434-residue protein sequence, read N- to C-terminus: Serine hydroxymethyltransferase (434 aa).

(6S)-5,6,7,8-tetrahydrofolate-binding positions include Leu124 and 128-130 (GHL). The residue at position 233 (Lys233) is an N6-(pyridoxal phosphate)lysine. Glu249 is a binding site for (6S)-5,6,7,8-tetrahydrofolate.

Belongs to the SHMT family. Homodimer. It depends on pyridoxal 5'-phosphate as a cofactor.

It is found in the cytoplasm. The catalysed reaction is (6R)-5,10-methylene-5,6,7,8-tetrahydrofolate + glycine + H2O = (6S)-5,6,7,8-tetrahydrofolate + L-serine. Its pathway is one-carbon metabolism; tetrahydrofolate interconversion. It participates in amino-acid biosynthesis; glycine biosynthesis; glycine from L-serine: step 1/1. In terms of biological role, catalyzes the reversible interconversion of serine and glycine with tetrahydrofolate (THF) serving as the one-carbon carrier. This reaction serves as the major source of one-carbon groups required for the biosynthesis of purines, thymidylate, methionine, and other important biomolecules. Also exhibits THF-independent aldolase activity toward beta-hydroxyamino acids, producing glycine and aldehydes, via a retro-aldol mechanism. The protein is Serine hydroxymethyltransferase of Synechococcus sp. (strain JA-3-3Ab) (Cyanobacteria bacterium Yellowstone A-Prime).